A 262-amino-acid chain; its full sequence is Octanoyltransferase (262 aa).

A BPL/LPL catalytic domain is found at 60 to 248; it reads GTADELVWLV…AFEMVFGPTR (189 aa). Substrate is bound by residues 99 to 106, 179 to 181, and 192 to 194; these read RGGEYTYH, AIG, and GLS. Residue Cys-210 is the Acyl-thioester intermediate of the active site.

This sequence belongs to the LipB family.

The protein resides in the cytoplasm. It catalyses the reaction octanoyl-[ACP] + L-lysyl-[protein] = N(6)-octanoyl-L-lysyl-[protein] + holo-[ACP] + H(+). The protein operates within protein modification; protein lipoylation via endogenous pathway; protein N(6)-(lipoyl)lysine from octanoyl-[acyl-carrier-protein]: step 1/2. Its function is as follows. Catalyzes the transfer of endogenously produced octanoic acid from octanoyl-acyl-carrier-protein onto the lipoyl domains of lipoate-dependent enzymes. Lipoyl-ACP can also act as a substrate although octanoyl-ACP is likely to be the physiological substrate. This chain is Octanoyltransferase, found in Sinorhizobium medicae (strain WSM419) (Ensifer medicae).